Consider the following 402-residue polypeptide: Argininosuccinate synthase (402 aa).

Residues 10–18 and alanine 37 contribute to the ATP site; that span reads AYSGGLDTS. L-citrulline contacts are provided by tyrosine 88 and serine 93. An ATP-binding site is contributed by glycine 118. Residues threonine 120, asparagine 124, and aspartate 125 each coordinate L-aspartate. Asparagine 124 lines the L-citrulline pocket. The L-citrulline site is built by arginine 128, serine 179, serine 188, glutamate 264, and tyrosine 276.

Belongs to the argininosuccinate synthase family. Type 1 subfamily. In terms of assembly, homotetramer.

It localises to the cytoplasm. It carries out the reaction L-citrulline + L-aspartate + ATP = 2-(N(omega)-L-arginino)succinate + AMP + diphosphate + H(+). It participates in amino-acid biosynthesis; L-arginine biosynthesis; L-arginine from L-ornithine and carbamoyl phosphate: step 2/3. The chain is Argininosuccinate synthase from Alkalilimnicola ehrlichii (strain ATCC BAA-1101 / DSM 17681 / MLHE-1).